Reading from the N-terminus, the 136-residue chain is Large ribosomal subunit protein bL17 (136 aa).

This sequence belongs to the bacterial ribosomal protein bL17 family. In terms of assembly, part of the 50S ribosomal subunit. Contacts protein L32.

The sequence is that of Large ribosomal subunit protein bL17 from Rickettsia prowazekii (strain Madrid E).